Here is a 181-residue protein sequence, read N- to C-terminus: Probable pyruvoyl-dependent arginine decarboxylase (181 aa).

Residue Ser-43 is modified to Pyruvic acid (Ser).

Belongs to the PdaD family. Pyruvate serves as cofactor.

It catalyses the reaction L-arginine + H(+) = agmatine + CO2. In Chlorobium luteolum (strain DSM 273 / BCRC 81028 / 2530) (Pelodictyon luteolum), this protein is Probable pyruvoyl-dependent arginine decarboxylase.